Reading from the N-terminus, the 684-residue chain is Histamine oxidase (684 aa).

316–327 provides a ligand contact to substrate; it reads YFDSGEYLVGRD. The active-site Proton acceptor is aspartate 318. Cysteine 337 and cysteine 363 are disulfide-bonded. Position 399–404 (399–404) interacts with substrate; sequence VGNYDY. The Schiff-base intermediate with substrate; via topaquinone role is filled by tyrosine 402. Tyrosine 402 is subject to 2',4',5'-topaquinone. The Cu cation site is built by histidine 451 and histidine 453. Ca(2+) contacts are provided by aspartate 460, glutamate 500, tyrosine 590, and aspartate 601. Aspartate 460 provides a ligand contact to Mn(2+). Aspartate 601 contacts Mn(2+). Histidine 612 lines the Cu cation pocket. The segment at 647 to 684 is disordered; that stretch reads SSAAGHCGTGSEREHAAPGGTAVGHSGPDTGGQGHCGH. Positions 675–684 are enriched in gly residues; it reads DTGGQGHCGH.

This sequence belongs to the copper/topaquinone oxidase family. In terms of assembly, homodimer. Cu cation serves as cofactor. Requires Zn(2+) as cofactor. It depends on Ca(2+) as a cofactor. The cofactor is L-topaquinone. Mn(2+) is required as a cofactor. In terms of processing, topaquinone (TPQ) is generated by copper-dependent autoxidation of a specific tyrosyl residue.

It is found in the cytoplasm. It catalyses the reaction a primary methyl amine + O2 + H2O = an aldehyde + H2O2 + NH4(+). It carries out the reaction histamine + O2 + H2O = imidazole-4-acetaldehyde + H2O2 + NH4(+). Oxidizes histamine. Other amines including phenethylamine, tyramine, tryptamine, putrescine, and benzylamine also serve as substrate. This is Histamine oxidase from Arthrobacter globiformis.